The sequence spans 229 residues: Large ribosomal subunit protein bL25 (229 aa).

Disordered regions lie at residues 1–21 (MDII…ASSR) and 182–229 (NAPE…KDKK). Residues 195-222 (PAAGAPAAGAAAAPAAGAAAPAKGAAPA) are compositionally biased toward low complexity.

The protein belongs to the bacterial ribosomal protein bL25 family. CTC subfamily. In terms of assembly, part of the 50S ribosomal subunit; part of the 5S rRNA/L5/L18/L25 subcomplex. Contacts the 5S rRNA. Binds to the 5S rRNA independently of L5 and L18.

This is one of the proteins that binds to the 5S RNA in the ribosome where it forms part of the central protuberance. The chain is Large ribosomal subunit protein bL25 from Sorangium cellulosum (strain So ce56) (Polyangium cellulosum (strain So ce56)).